A 356-amino-acid chain; its full sequence is Probable cytosolic iron-sulfur protein assembly protein 1 (356 aa).

WD repeat units lie at residues 34 to 73 (GHKR…IRAE), 89 to 128 (GHDS…DYEC), 134 to 173 (EHSQ…DWYC), 179 to 218 (AHSS…ECVE), 244 to 291 (HFSG…ATLR), and 319 to 356 (AHGS…RIWT).

The protein belongs to the WD repeat CIA1 family.

Its function is as follows. Essential component of the cytosolic iron-sulfur (Fe/S) protein assembly machinery. Required for the maturation of extramitochondrial Fe/S proteins. This chain is Probable cytosolic iron-sulfur protein assembly protein 1, found in Malassezia globosa (strain ATCC MYA-4612 / CBS 7966) (Dandruff-associated fungus).